We begin with the raw amino-acid sequence, 114 residues long: T cell receptor beta variable 5-1 (114 aa).

Positions 1-21 (MGSRLLCWVLLCLLGAGPVKA) are cleaved as a signal peptide. In terms of domain architecture, Ig-like spans 22 to 114 (GVTQTPRYLI…SALYLCASSL (93 aa)). The cysteines at positions 42 and 110 are disulfide-linked. An N-linked (GlcNAc...) asparagine glycan is attached at Asn-96.

In terms of assembly, alpha-beta TR is a heterodimer composed of an alpha and beta chain; disulfide-linked. The alpha-beta TR is associated with the transmembrane signaling CD3 coreceptor proteins to form the TR-CD3 (TcR or TCR). The assembly of alpha-beta TR heterodimers with CD3 occurs in the endoplasmic reticulum where a single alpha-beta TR heterodimer associates with one CD3D-CD3E heterodimer, one CD3G-CD3E heterodimer and one CD247 homodimer forming a stable octameric structure. CD3D-CD3E and CD3G-CD3E heterodimers preferentially associate with TR alpha and TR beta chains, respectively. The association of the CD247 homodimer is the last step of TcR assembly in the endoplasmic reticulum and is required for transport to the cell surface.

It localises to the cell membrane. V region of the variable domain of T cell receptor (TR) beta chain that participates in the antigen recognition. Alpha-beta T cell receptors are antigen specific receptors which are essential to the immune response and are present on the cell surface of T lymphocytes. Recognize peptide-major histocompatibility (MH) (pMH) complexes that are displayed by antigen presenting cells (APC), a prerequisite for efficient T cell adaptive immunity against pathogens. Binding of alpha-beta TR to pMH complex initiates TR-CD3 clustering on the cell surface and intracellular activation of LCK that phosphorylates the ITAM motifs of CD3G, CD3D, CD3E and CD247 enabling the recruitment of ZAP70. In turn ZAP70 phosphorylates LAT, which recruits numerous signaling molecules to form the LAT signalosome. The LAT signalosome propagates signal branching to three major signaling pathways, the calcium, the mitogen-activated protein kinase (MAPK) kinase and the nuclear factor NF-kappa-B (NF-kB) pathways, leading to the mobilization of transcription factors that are critical for gene expression and essential for T cell growth and differentiation. The T cell repertoire is generated in the thymus, by V-(D)-J rearrangement. This repertoire is then shaped by intrathymic selection events to generate a peripheral T cell pool of self-MH restricted, non-autoaggressive T cells. Post-thymic interaction of alpha-beta TR with the pMH complexes shapes TR structural and functional avidity. The sequence is that of T cell receptor beta variable 5-1 from Homo sapiens (Human).